The primary structure comprises 290 residues: 2-dehydro-3-deoxyphosphooctonate aldolase 1 (290 aa).

N-acetylalanine is present on Ala-2.

The protein belongs to the KdsA family. As to expression, expressed in shoots.

It is found in the cytoplasm. The catalysed reaction is D-arabinose 5-phosphate + phosphoenolpyruvate + H2O = 3-deoxy-alpha-D-manno-2-octulosonate-8-phosphate + phosphate. Catalyzes the stereospecific condensation of D-arabinose 5-phosphate and phosphoenolpyruvate to form 3-deoxy-D-manno-octulosonate 8-phosphate (KDO-8-phosphate) and inorganic phosphate. Involved in the biosynthesis of 3-deoxy-D-manno-octulosonate (KDO) which is an indispensable component of rhamnogalacturonan II (RG-II), a structurally complex pectic polysaccharide of the primary cell wall. RG-II is essential for the cell wall integrity of rapidly growing tissues and pollen tube growth and elongation. The protein is 2-dehydro-3-deoxyphosphooctonate aldolase 1 (KDSA1) of Arabidopsis thaliana (Mouse-ear cress).